Reading from the N-terminus, the 383-residue chain is MSRRNWVNFFSRGQGFDLTNDLERGYESALLIQNLELEFYGDRLVRSDVELGVPKSVQASILRRFRAALLICRTTLESVERNRGQFDLQELRQLQLIEAVVSRYGYQLPSGGSPAISRAPEALPRSLLGFFDTVRRQLDPASEETVVAGFRRRRNSTLISLRILLLLILVPLLIQQVAGAYIISPAVDRLSPELPFLSYPKPKLEEQAVEKLRVYKQELEFDALLNSDQPLEADQLRQKLAEKAIELKDEADGLSVQAVKNVFSDLSALIAFTVVCFASRDDLRVMRGFFDEAVYGLSDSAKAFAIILFTDIFVGFHSPEGWTVLLNGIAKHLGLPSQENFVMLFIATFPVILATIFKYWIFRYLNRVSPSSVATLKGMNGSG.

4 helical membrane-spanning segments follow: residues 163–183 (ILLL…AYII), 258–278 (AVKN…VCFA), 306–326 (IILF…TVLL), and 341–361 (FVML…KYWI).

It belongs to the CemA family.

The protein resides in the cell inner membrane. Functionally, required for H(+) efflux immediately after light irradiation to form a rapid H(+) concentration gradient across the thylakoid membranes. Together with PxcL, contributes to transient H(+) uptake following dark to light transition. This chain is Proton extrusion protein PxcA, found in Synechococcus sp. (strain CC9902).